Reading from the N-terminus, the 495-residue chain is ATP synthase subunit beta, chloroplastic (495 aa).

172-179 provides a ligand contact to ATP; sequence GGAGVGKT.

It belongs to the ATPase alpha/beta chains family. As to quaternary structure, F-type ATPases have 2 components, CF(1) - the catalytic core - and CF(0) - the membrane proton channel. CF(1) has five subunits: alpha(3), beta(3), gamma(1), delta(1), epsilon(1). CF(0) has four main subunits: a(1), b(1), b'(1) and c(9-12).

Its subcellular location is the plastid. The protein resides in the chloroplast thylakoid membrane. The catalysed reaction is ATP + H2O + 4 H(+)(in) = ADP + phosphate + 5 H(+)(out). In terms of biological role, produces ATP from ADP in the presence of a proton gradient across the membrane. The catalytic sites are hosted primarily by the beta subunits. The polypeptide is ATP synthase subunit beta, chloroplastic (Scilla siberica (Siberian squill)).